A 353-amino-acid chain; its full sequence is Cyclic GMP-AMP synthase-like receptor (353 aa).

ATP is bound by residues S60 and 72 to 74 (EYD). E72, D74, and D183 together coordinate Mg(2+). D183 contacts GTP. K245 is an ATP binding site. Positions 269 and 270 each coordinate Mn(2+).

Belongs to the mab-21 family. Requires Mg(2+) as cofactor. It depends on Mn(2+) as a cofactor.

It catalyses the reaction GTP + ATP = 2',3'-cGAMP + 2 diphosphate. It carries out the reaction GTP + ATP = pppGp(2'-5')A + diphosphate. The catalysed reaction is pppGp(2'-5')A = 2',3'-cGAMP + diphosphate. Its function is as follows. Nucleotidyltransferase that catalyzes the formation of cyclic GMP-AMP (2',3'-cGAMP) from ATP and GTP and plays a key role in innate immunity. Acts as a key sensor of double-stranded RNA (dsRNA), the presence of dsRNA in the cytoplasm being a danger signal that triggers the immune responses. Directly binds dsRNA, activating the nucleotidyltransferase activity, leading to synthesis of 2',3'-cGAMP, a second messenger that binds to and activates Sting, thereby triggering the immune response via activation of the NF-kappa-B transcription factor. This chain is Cyclic GMP-AMP synthase-like receptor, found in Nicrophorus vespilloides (Boreal carrion beetle).